The sequence spans 626 residues: MADQRMDISSTISDFMSPGPTDLLSSSLGTSGVDCNRKRKGSSTDYQESMDTDKDDPHGRLEYTEHQGRIKNAREAHSQIEKRRRDKMNSFIDELASLVPTCNAMSRKLDKLTVLRMAVQHMKTLRGATNPYTEANYKPTFLSDDELKHLILRAADGFLFVVGCDRGKILFVSESVFKILNYSQNDLIGQSLFDYLHPKDIAKVKEQLSSSDTAPRERLIDAKTGLPVKTDITPGPSRLCSGARRSFFCRMKCNRPSVKVEDKDFPSTCSKKKADRKSFCTIHSTGYLKSWPPTKMGLDEDNEPDNEGCNLSCLVAIGRLHSHVVPQPVNGEIRVKSMEYVSRHAIDGKFVFVDQRATAILAYLPQELLGTSCYEYFHQDDIGHLAECHRQVLQTREKITTNCYKFKIKDGSFITLRSRWFSFMNPWTKEVEYIVSTNTVVLANVLEGGDPTFPQLTASPHSMDSMLPSGEGGPKRTHPTVPGIPGGTRAGAGKIGRMIAEEIMEIHRIRGSSPSSCGSSPLNITSTPPPDASSPGGKKILNGGTPDIPSSGLLSGQAQENPGYPYSDSSSILGENPHIGIDMIDNDQGSSSPSNDEAAMAVIMSLLEADAGLGGPVDFSDLPWPL.

Residues 1 to 60 (MADQRMDISSTISDFMSPGPTDLLSSSLGTSGVDCNRKRKGSSTDYQESMDTDKDDPHGR) form a disordered region. S17 carries the phosphoserine; by GSK3-beta modification. The segment covering 17–32 (SPGPTDLLSSSLGTSG) has biased composition (low complexity). A Phosphothreonine; by GSK3-beta modification is found at T21. The Nuclear localization signal signature appears at 36–41 (NRKRKG). A compositionally biased stretch (basic and acidic residues) spans 51 to 60 (DTDKDDPHGR). One can recognise a bHLH domain in the interval 72-125 (NAREAHSQIEKRRRDKMNSFIDELASLVPTCNAMSRKLDKLTVLRMAVQHMKTL). At S78 the chain carries Phosphoserine. Phosphoserine; by CK2 is present on S90. Positions 142 to 152 (LSDDELKHLIL) match the Nuclear export signal 1 motif. The region spanning 143–215 (SDDELKHLIL…EQLSSSDTAP (73 aa)) is the PAS 1 domain. Residue K252 forms a Glycyl lysine isopeptide (Lys-Gly) (interchain with G-Cter in SUMO2 and SUMO3) linkage. A Glycyl lysine isopeptide (Lys-Gly) (interchain with G-Cter in SUMO2) cross-link involves residue K259. Residues 326–396 (PQPVNGEIRV…ECHRQVLQTR (71 aa)) form the PAS 2 domain. The short motif at 361–369 (LAYLPQELL) is the Nuclear export signal 2 element. In terms of domain architecture, PAC spans 401–444 (TNCYKFKIKDGSFITLRSRWFSFMNPWTKEVEYIVSTNTVVLAN). Disordered regions lie at residues 458-493 (ASPHSMDSMLPSGEGGPKRTHPTVPGIPGGTRAGAG) and 511-595 (GSSP…SPSN). Gly residues predominate over residues 484 to 493 (IPGGTRAGAG). The interaction with CIART stretch occupies residues 508-588 (RIRGSSPSSC…IGIDMIDNDQ (81 aa)). The span at 511–521 (GSSPSSCGSSP) shows a compositional bias: low complexity. An N6-acetyllysine modification is found at K538.

In terms of assembly, component of the circadian clock oscillator which includes the CRY1/2 proteins, CLOCK or NPAS2,BMAL1 or BMAL2, CSNK1D and/or CSNK1E, TIMELESS and the PER1/2/3 proteins. Forms a heterodimer with CLOCK. The CLOCK-BMAL1 heterodimer is required for E-box-dependent transactivation, for CLOCK nuclear translocation and degradation, and, for phosphorylation of both CLOCK and BMAL1. Part of a nuclear complex which also includes RACK1 and PRKCA; RACK1 and PRKCA are recruited to the complex in a circadian manner. Interacts with NPAS2. Interacts with EZH2. Interacts with SUMO3. Interacts with SIRT1. Interacts with AHR. Interacts with ID1, ID2 and ID3. Interacts with DDX4. Interacts with OGT. Interacts with EED and SUZ12. Interacts with MTA1. Interacts with CIART. Interacts with HSP90. Interacts with KAT2B and EP300. Interacts with BHLHE40/DEC1 and BHLHE41/DEC2. Interacts with RELB and the interaction is enhanced in the presence of CLOCK. Interacts with PER1, PER2, CRY1 and CRY2 and this interaction requires a translocation to the nucleus. Interaction of the CLOCK-BMAL1 heterodimer with PER or CRY inhibits transcription activation. Interaction of the CLOCK-BMAL1 with CRY1 is independent of DNA but with PER2 is off DNA. The CLOCK-BMAL1 heterodimer interacts with GSK3B. Interacts with KDM5A. Interacts with KMT2A; in a circadian manner. Interacts with UBE3A. Interacts with PRKCG. Interacts with MAGEL2. Interacts with NCOA2. Interacts with THRAP3. The CLOCK-BMAL1 heterodimer interacts with PASD1. Interacts with PASD1. Interacts with USP9X. Interacts with PIWIL2 (via PIWI domain). Interacts with HDAC3. Interacts with HNF4A. Post-translationally, ubiquitinated, leading to its proteasomal degradation. Deubiquitinated by USP9X. O-glycosylated; contains O-GlcNAc. O-glycosylation by OGT prevents protein degradation by inhibiting ubiquitination. It also stabilizes the CLOCK-BMAL1 heterodimer thereby increasing CLOCK-BMAL1-mediated transcription of genes in the negative loop of the circadian clock such as PER1/2/3 and CRY1/2. In terms of processing, acetylated on Lys-538 by CLOCK during the repression phase of the circadian cycle. Acetylation facilitates recruitment of CRY1 protein and initiates the repression phase of the circadian cycle. Acetylated at Lys-538 by KAT5 during the activation phase of the cycle, leading to recruitment of the positive transcription elongation factor b (P-TEFb) and BRD4, followed by productive elongation of circadian transcripts. Deacetylated by SIRT1, which may result in decreased protein stability. Post-translationally, phosphorylated upon dimerization with CLOCK. Phosphorylation enhances the transcriptional activity, alters the subcellular localization and decreases the stability of the CLOCK-BMAL1 heterodimer by promoting its degradation. Phosphorylation shows circadian variations in the liver with a peak between CT10 to CT14. Phosphorylation at Ser-90 by CK2 is essential for its nuclear localization, its interaction with CLOCK and controls CLOCK nuclear entry. Dephosphorylation at Ser-78 is important for dimerization with CLOCK and transcriptional activity. Sumoylated on Lys-259 upon dimerization with CLOCK. Predominantly conjugated to poly-SUMO2/3 rather than SUMO1 and the level of these conjugates undergo rhythmic variation, peaking at CT9-CT12. Sumoylation localizes it exclusively to the PML body and promotes its ubiquitination in the PML body, ubiquitin-dependent proteasomal degradation and the transcriptional activity of the CLOCK-BMAL1 heterodimer. In terms of processing, undergoes lysosome-mediated degradation in a time-dependent manner in the liver. In terms of tissue distribution, hair follicles (at protein level). Highly expressed in the adult brain, skeletal muscle and heart.

The protein resides in the nucleus. The protein localises to the cytoplasm. It is found in the PML body. With respect to regulation, there is conflicting data about the effect of NAD cofactors on activity. PubMed:11441146 suggests that the redox state of the cell can modulate the transcriptional activity of the CLOCK-BMAL1 heterodimer; NADH and NADPH enhance the DNA-binding activity of the heterodimer. PubMed:23229515 reports that NADH and NADPH have no significant effect on DNA-binding activity of the CLOCK-BMAL1 heterodimer. Its function is as follows. Transcriptional activator which forms a core component of the circadian clock. The circadian clock, an internal time-keeping system, regulates various physiological processes through the generation of approximately 24 hour circadian rhythms in gene expression, which are translated into rhythms in metabolism and behavior. It is derived from the Latin roots 'circa' (about) and 'diem' (day) and acts as an important regulator of a wide array of physiological functions including metabolism, sleep, body temperature, blood pressure, endocrine, immune, cardiovascular, and renal function. Consists of two major components: the central clock, residing in the suprachiasmatic nucleus (SCN) of the brain, and the peripheral clocks that are present in nearly every tissue and organ system. Both the central and peripheral clocks can be reset by environmental cues, also known as Zeitgebers (German for 'timegivers'). The predominant Zeitgeber for the central clock is light, which is sensed by retina and signals directly to the SCN. The central clock entrains the peripheral clocks through neuronal and hormonal signals, body temperature and feeding-related cues, aligning all clocks with the external light/dark cycle. Circadian rhythms allow an organism to achieve temporal homeostasis with its environment at the molecular level by regulating gene expression to create a peak of protein expression once every 24 hours to control when a particular physiological process is most active with respect to the solar day. Transcription and translation of core clock components (CLOCK, NPAS2, BMAL1, BMAL2, PER1, PER2, PER3, CRY1 and CRY2) plays a critical role in rhythm generation, whereas delays imposed by post-translational modifications (PTMs) are important for determining the period (tau) of the rhythms (tau refers to the period of a rhythm and is the length, in time, of one complete cycle). A diurnal rhythm is synchronized with the day/night cycle, while the ultradian and infradian rhythms have a period shorter and longer than 24 hours, respectively. Disruptions in the circadian rhythms contribute to the pathology of cardiovascular diseases, cancer, metabolic syndromes and aging. A transcription/translation feedback loop (TTFL) forms the core of the molecular circadian clock mechanism. Transcription factors, CLOCK or NPAS2 and BMAL1 or BMAL2, form the positive limb of the feedback loop, act in the form of a heterodimer and activate the transcription of core clock genes and clock-controlled genes (involved in key metabolic processes), harboring E-box elements (5'-CACGTG-3') within their promoters. The core clock genes: PER1/2/3 and CRY1/2 which are transcriptional repressors form the negative limb of the feedback loop and interact with the CLOCK|NPAS2-BMAL1|BMAL2 heterodimer inhibiting its activity and thereby negatively regulating their own expression. This heterodimer also activates nuclear receptors NR1D1/2 and RORA/B/G, which form a second feedback loop and which activate and repress BMAL1 transcription, respectively. BMAL1 positively regulates myogenesis and negatively regulates adipogenesis via the transcriptional control of the genes of the canonical Wnt signaling pathway. Plays a role in normal pancreatic beta-cell function; regulates glucose-stimulated insulin secretion via the regulation of antioxidant genes NFE2L2/NRF2 and its targets SESN2, PRDX3, CCLC and CCLM. Negatively regulates the mTORC1 signaling pathway; regulates the expression of MTOR and DEPTOR. Controls diurnal oscillations of Ly6C inflammatory monocytes; rhythmic recruitment of the PRC2 complex imparts diurnal variation to chemokine expression that is necessary to sustain Ly6C monocyte rhythms. Regulates the expression of HSD3B2, STAR, PTGS2, CYP11A1, CYP19A1 and LHCGR in the ovary and also the genes involved in hair growth. Plays an important role in adult hippocampal neurogenesis by regulating the timely entry of neural stem/progenitor cells (NSPCs) into the cell cycle and the number of cell divisions that take place prior to cell-cycle exit. Regulates the circadian expression of CIART and KLF11. The CLOCK-BMAL1 heterodimer regulates the circadian expression of SERPINE1/PAI1, VWF, B3, CCRN4L/NOC, NAMPT, DBP, MYOD1, PPARGC1A, PPARGC1B, SIRT1, GYS2, F7, NGFR, GNRHR, BHLHE40/DEC1, ATF4, MTA1, KLF10 and also genes implicated in glucose and lipid metabolism. Promotes rhythmic chromatin opening, regulating the DNA accessibility of other transcription factors. The NPAS2-BMAL1 heterodimer positively regulates the expression of MAOA, F7 and LDHA and modulates the circadian rhythm of daytime contrast sensitivity by regulating the rhythmic expression of adenylate cyclase type 1 (ADCY1) in the retina. The preferred binding motif for the CLOCK-BMAL1 heterodimer is 5'-CACGTGA-3', which contains a flanking adenine nucleotide at the 3-prime end of the canonical 6-nucleotide E-box sequence. CLOCK specifically binds to the half-site 5'-CAC-3', while BMAL1 binds to the half-site 5'-GTGA-3'. The CLOCK-BMAL1 heterodimer also recognizes the non-canonical E-box motifs 5'-AACGTGA-3' and 5'-CATGTGA-3'. Essential for the rhythmic interaction of CLOCK with ASS1 and plays a critical role in positively regulating CLOCK-mediated acetylation of ASS1. Plays a role in protecting against lethal sepsis by limiting the expression of immune checkpoint protein CD274 in macrophages in a PKM2-dependent manner. Regulates the diurnal rhythms of skeletal muscle metabolism via transcriptional activation of genes promoting triglyceride synthesis (DGAT2) and metabolic efficiency (COQ10B). (Microbial infection) Regulates SARS coronavirus-2/SARS-CoV-2 entry and replication in lung epithelial cells probably through the post-transcriptional regulation of ACE2 and interferon-stimulated gene expression. The polypeptide is Basic helix-loop-helix ARNT-like protein 1 (Homo sapiens (Human)).